The primary structure comprises 488 residues: Glutamyl-tRNA(Gln) amidotransferase subunit A (488 aa).

Catalysis depends on charge relay system residues lysine 76 and serine 152. Residue serine 176 is the Acyl-ester intermediate of the active site.

The protein belongs to the amidase family. GatA subfamily. Heterotrimer of A, B and C subunits.

The catalysed reaction is L-glutamyl-tRNA(Gln) + L-glutamine + ATP + H2O = L-glutaminyl-tRNA(Gln) + L-glutamate + ADP + phosphate + H(+). In terms of biological role, allows the formation of correctly charged Gln-tRNA(Gln) through the transamidation of misacylated Glu-tRNA(Gln) in organisms which lack glutaminyl-tRNA synthetase. The reaction takes place in the presence of glutamine and ATP through an activated gamma-phospho-Glu-tRNA(Gln). This Oceanobacillus iheyensis (strain DSM 14371 / CIP 107618 / JCM 11309 / KCTC 3954 / HTE831) protein is Glutamyl-tRNA(Gln) amidotransferase subunit A.